Reading from the N-terminus, the 504-residue chain is ATP synthase subunit alpha 2 (504 aa).

Residue Gly169–Thr176 participates in ATP binding.

The protein belongs to the ATPase alpha/beta chains family. F-type ATPases have 2 components, CF(1) - the catalytic core - and CF(0) - the membrane proton channel. CF(1) has five subunits: alpha(3), beta(3), gamma(1), delta(1), epsilon(1). CF(0) has three main subunits: a(1), b(2) and c(9-12). The alpha and beta chains form an alternating ring which encloses part of the gamma chain. CF(1) is attached to CF(0) by a central stalk formed by the gamma and epsilon chains, while a peripheral stalk is formed by the delta and b chains.

The protein resides in the cell membrane. It catalyses the reaction ATP + H2O + 4 H(+)(in) = ADP + phosphate + 5 H(+)(out). Its function is as follows. Produces ATP from ADP in the presence of a proton gradient across the membrane. The alpha chain is a regulatory subunit. The chain is ATP synthase subunit alpha 2 from Listeria monocytogenes serotype 4b (strain F2365).